Consider the following 87-residue polypeptide: Small ribosomal subunit protein uS17 (87 aa).

Belongs to the universal ribosomal protein uS17 family. In terms of assembly, part of the 30S ribosomal subunit.

Functionally, one of the primary rRNA binding proteins, it binds specifically to the 5'-end of 16S ribosomal RNA. This chain is Small ribosomal subunit protein uS17, found in Bacillus subtilis (strain 168).